The sequence spans 369 residues: Bi-functional coumaroyl CoA and feruloyl CoA ortho-hydroxylase Diox2 (369 aa).

A Fe2OG dioxygenase domain is found at G215–P318. Residue Y224 participates in 2-oxoglutarate binding. Fe cation is bound by residues H239, D241, and H299. Residues R309 and S311 each contribute to the 2-oxoglutarate site.

This sequence belongs to the iron/ascorbate-dependent oxidoreductase family. Requires L-ascorbate as cofactor. The cofactor is Fe(2+).

It carries out the reaction (E)-4-coumaroyl-CoA + 2-oxoglutarate + O2 = (E)-2,4-dihydroxycinnamoyl-CoA + succinate + CO2. The enzyme catalyses (E)-feruloyl-CoA + 2-oxoglutarate + O2 = (E)-6-hydroxyferuloyl-CoA + succinate + CO2. Its pathway is phenylpropanoid metabolism. Its function is as follows. 2-oxoglutarate (OG)- and Fe(II)-dependent dioxygenase (2OGD) involved in scopoletin and umbelliferone biosynthesis. Converts feruloyl CoA into 6'-hydroxyferuloyl CoA, and p-coumaroyl CoA into 2,4-dihydroxycinnamoyl-CoA. The polypeptide is Bi-functional coumaroyl CoA and feruloyl CoA ortho-hydroxylase Diox2 (Ruta graveolens (Common rue)).